The primary structure comprises 247 residues: Membrane-embedded CAAX protease MroQ (247 aa).

Residues 1–17 form the signal peptide; the sequence is MTRLWASLLTVIIYILS. The next 3 helical transmembrane spans lie at 42–62, 81–101, and 119–139; these read VIYI…LINL, IIPW…VVSI, and LIII…IGPL. Residue Glu141 is part of the active site. Transmembrane regions (helical) follow at residues 162–182 and 183–203; these read IVAF…AHND and FKFI…YVWT.

The protein belongs to the peptidase U48 family.

Its subcellular location is the membrane. In terms of biological role, participates in the regulation of the Agr quorum sensing activity and plays thereby an important role in virulence. Mechanistically, elicits a protease dependent control of Agr activity without playing a role in the processing of the pheromone-precursor AgrD. The chain is Membrane-embedded CAAX protease MroQ (mroQ) from Staphylococcus aureus (strain USA300).